The following is a 136-amino-acid chain: Psoriasis susceptibility 1 candidate gene 2 protein (136 aa).

The first 22 residues, 1–22 (MILNWKLLGILVLCLHTRGISG), serve as a signal peptide directing secretion. The interval 20–136 (ISGSEGHPSH…DLDPPREEYR (117 aa)) is disordered. 2 stretches are compositionally biased toward pro residues: residues 44-69 (PQGPPVPGDPWPGAPPLFEDPPPTRP) and 84-116 (PEPPRTDPPQPPRPDDPWPAGPQPPENPWPPAP). Residues 118-136 (VDNRPQEEPDLDPPREEYR) show a composition bias toward basic and acidic residues.

As to expression, expressed in skin. Also expressed in heart and skeletal muscle.

It is found in the secreted. This is Psoriasis susceptibility 1 candidate gene 2 protein (PSORS1C2) from Homo sapiens (Human).